A 347-amino-acid chain; its full sequence is Protein RecA (347 aa).

G65–T72 serves as a coordination point for ATP.

This sequence belongs to the RecA family.

It is found in the cytoplasm. Can catalyze the hydrolysis of ATP in the presence of single-stranded DNA, the ATP-dependent uptake of single-stranded DNA by duplex DNA, and the ATP-dependent hybridization of homologous single-stranded DNAs. It interacts with LexA causing its activation and leading to its autocatalytic cleavage. In Marinobacter nauticus (strain ATCC 700491 / DSM 11845 / VT8) (Marinobacter aquaeolei), this protein is Protein RecA.